A 725-amino-acid polypeptide reads, in one-letter code: ATP-dependent zinc metalloprotease FtsH (725 aa).

Topologically, residues 1-11 (MDKMKKPKINW) are cytoplasmic. A helical membrane pass occupies residues 12–32 (LLIVIVGIIAALLITVLVLLF). The Extracellular segment spans residues 33-160 (SPKTQPKSFD…LFGQHIVQEN (128 aa)). Residues 161–181 (GFITFIKAIWFPALIAIIIFL) traverse the membrane as a helical segment. The Cytoplasmic portion of the chain corresponds to 182 to 725 (GYKAQSRAAS…EEETLAEKAE (544 aa)). 252–259 (GPPGTGKT) provides a ligand contact to ATP. H474 contributes to the Zn(2+) binding site. E475 is an active-site residue. 2 residues coordinate Zn(2+): H478 and D552. Residues 680-725 (QVNESQEKDKQKNAQIKEDLSKMDKKDNLTKAKDKGEEETLAEKAE) are disordered. Over residues 684–725 (SQEKDKQKNAQIKEDLSKMDKKDNLTKAKDKGEEETLAEKAE) the composition is skewed to basic and acidic residues.

This sequence in the central section; belongs to the AAA ATPase family. The protein in the C-terminal section; belongs to the peptidase M41 family. In terms of assembly, homohexamer. It depends on Zn(2+) as a cofactor.

The protein resides in the cell membrane. Its function is as follows. Acts as a processive, ATP-dependent zinc metallopeptidase for both cytoplasmic and membrane proteins. Plays a role in the quality control of integral membrane proteins. In Mycoplasmopsis pulmonis (strain UAB CTIP) (Mycoplasma pulmonis), this protein is ATP-dependent zinc metalloprotease FtsH.